We begin with the raw amino-acid sequence, 245 residues long: tRNA1(Val) (adenine(37)-N6)-methyltransferase (245 aa).

This sequence belongs to the methyltransferase superfamily. tRNA (adenine-N(6)-)-methyltransferase family.

The protein localises to the cytoplasm. It carries out the reaction adenosine(37) in tRNA1(Val) + S-adenosyl-L-methionine = N(6)-methyladenosine(37) in tRNA1(Val) + S-adenosyl-L-homocysteine + H(+). Its function is as follows. Specifically methylates the adenine in position 37 of tRNA(1)(Val) (anticodon cmo5UAC). The polypeptide is tRNA1(Val) (adenine(37)-N6)-methyltransferase (Klebsiella pneumoniae subsp. pneumoniae (strain ATCC 700721 / MGH 78578)).